Consider the following 306-residue polypeptide: Aspartate carbamoyltransferase catalytic subunit (306 aa).

Carbamoyl phosphate is bound by residues Arg54 and Thr55. Lys83 lines the L-aspartate pocket. Carbamoyl phosphate-binding residues include Arg104, His132, and Gln135. Residues Arg165 and Arg227 each coordinate L-aspartate. Leu266 and Pro267 together coordinate carbamoyl phosphate.

The protein belongs to the aspartate/ornithine carbamoyltransferase superfamily. ATCase family. In terms of assembly, heterododecamer (2C3:3R2) of six catalytic PyrB chains organized as two trimers (C3), and six regulatory PyrI chains organized as three dimers (R2).

It carries out the reaction carbamoyl phosphate + L-aspartate = N-carbamoyl-L-aspartate + phosphate + H(+). Its pathway is pyrimidine metabolism; UMP biosynthesis via de novo pathway; (S)-dihydroorotate from bicarbonate: step 2/3. Its function is as follows. Catalyzes the condensation of carbamoyl phosphate and aspartate to form carbamoyl aspartate and inorganic phosphate, the committed step in the de novo pyrimidine nucleotide biosynthesis pathway. This chain is Aspartate carbamoyltransferase catalytic subunit, found in Clostridium novyi (strain NT).